Here is a 411-residue protein sequence, read N- to C-terminus: Gamma-glutamyl phosphate reductase (411 aa).

The protein belongs to the gamma-glutamyl phosphate reductase family.

Its subcellular location is the cytoplasm. The catalysed reaction is L-glutamate 5-semialdehyde + phosphate + NADP(+) = L-glutamyl 5-phosphate + NADPH + H(+). It participates in amino-acid biosynthesis; L-proline biosynthesis; L-glutamate 5-semialdehyde from L-glutamate: step 2/2. Its function is as follows. Catalyzes the NADPH-dependent reduction of L-glutamate 5-phosphate into L-glutamate 5-semialdehyde and phosphate. The product spontaneously undergoes cyclization to form 1-pyrroline-5-carboxylate. The chain is Gamma-glutamyl phosphate reductase from Nautilia profundicola (strain ATCC BAA-1463 / DSM 18972 / AmH).